The sequence spans 290 residues: Porphobilinogen deaminase (290 aa).

Cys237 carries the S-(dipyrrolylmethanemethyl)cysteine modification.

Belongs to the HMBS family. In terms of assembly, monomer. The cofactor is dipyrromethane.

It catalyses the reaction 4 porphobilinogen + H2O = hydroxymethylbilane + 4 NH4(+). It functions in the pathway porphyrin-containing compound metabolism; protoporphyrin-IX biosynthesis; coproporphyrinogen-III from 5-aminolevulinate: step 2/4. Functionally, tetrapolymerization of the monopyrrole PBG into the hydroxymethylbilane pre-uroporphyrinogen in several discrete steps. This Clostridium botulinum (strain ATCC 19397 / Type A) protein is Porphobilinogen deaminase.